We begin with the raw amino-acid sequence, 391 residues long: Zinc finger protein ubi-d4 (391 aa).

At alanine 2 the chain carries N-acetylalanine. Residues lysine 10, lysine 99, lysine 107, and lysine 108 each participate in a glycyl lysine isopeptide (Lys-Gly) (interchain with G-Cter in SUMO2) cross-link. Disordered regions lie at residues 79-146 and 165-196; these read WRKK…LGEF and DDLD…ARKK. Basic and acidic residues-rich tracts occupy residues 100-110 and 126-140; these read PDTDQTLKKEG and DPLE…RVDD. Position 142 is a phosphoserine (serine 142). Residues 165 to 174 show a composition bias toward acidic residues; sequence DDLDDEDYEE. A Phosphotyrosine modification is found at tyrosine 172. Threonine 176 carries the phosphothreonine modification. Residues lysine 178 and lysine 196 each participate in a glycyl lysine isopeptide (Lys-Gly) (interchain with G-Cter in SUMO2) cross-link. Serine 200 carries the phosphoserine modification. Residues 209 to 232 form a C2H2-type zinc finger; the sequence is YACDICGKRYKNRPGLSYHYAHSH. The interval 233–266 is disordered; sequence LAEEEGEDKEDSQPPTPVSQRSEEQKSKKGPDGL. Position 244 is a phosphoserine (serine 244). Residues 253-263 are compositionally biased toward basic and acidic residues; the sequence is RSEEQKSKKGP. PHD-type zinc fingers lie at residues 270–330 and 327–377; these read NNYC…CKCC and CKCC…CLDL. Position 280 is a phosphoserine (serine 280). Lysine 281 is covalently cross-linked (Glycyl lysine isopeptide (Lys-Gly) (interchain with G-Cter in SUMO2)).

It belongs to the requiem/DPF family. In terms of assembly, interacts with the nucleosomes, in particular nucleosomes bearing histone H3 crotonylated at 'Lys-14' (H3K14cr) for which DPF2 has high affinity. Also interacts (via PHD-type zinc finger domains) with histone H3 butyrylated at 'Lys-14' (H3K14bu), histone H3 propionylated at 'Lys-14' (H3K14pr), and histone H3 acetylated at 'Lys-14' (H3K14ac). Interacts with histone H3 acetylated at 'Lys-9' (H3K9ac), histone H3 di-methylated at 'Lys-9' (H3K9me2), and histone H3 tri-methylated at 'Lys-9' (H3K9me3). Interacts with histone H4 acetylated at 'Lys-12' (H4K12ac). Interacts with histone H4 acetylated at 'Lys-16' (H4K16ac). Interacts with SWI/SNF complex components. Interacts with SMARCA2, SMARCA4, SMARCB1 and SMARCD1. Interacts with SMARCC1, SMARCC2 and ACTL6A. Interacts with RUNX1. Ubiquitous.

The protein resides in the nucleus. The protein localises to the cytoplasm. Its function is as follows. Plays an active role in transcriptional regulation by binding modified histones H3 and H4. Is a negative regulator of myeloid differentiation of hematopoietic progenitor cells. Might also have a role in the development and maturation of lymphoid cells. Involved in the regulation of non-canonical NF-kappa-B pathway. The sequence is that of Zinc finger protein ubi-d4 (DPF2) from Homo sapiens (Human).